The primary structure comprises 461 residues: Serine incorporator 5 (461 aa).

Over 1–36 the chain is Extracellular; it reads MSARCCAGQLACCCGSAGCSLCCGCCPKFRQSRTTR. The helical transmembrane segment at 37–57 threads the bilayer; it reads FMYLFYFILVIALCCVMMTPS. Topologically, residues 58-90 are cytoplasmic; the sequence is VMKQVKDHIPFFEEFCKKTQAGGDACENLVGYS. A helical transmembrane segment spans residues 91 to 111; it reads AVYRVCFGMACFFALFCLLTL. At 112–125 the chain is on the extracellular side; the sequence is KVNNSKSCRAYIHN. An N-linked (GlcNAc...) asparagine glycan is attached at N114. Residues 126–146 form a helical membrane-spanning segment; it reads GFWFFKLLLLGAMCSGAFFIP. The Cytoplasmic segment spans residues 147–157; it reads DQETFLKVWRY. The helical transmembrane segment at 158–178 threads the bilayer; the sequence is VGAGGSFLFICIQLLLIVQFA. The Extracellular segment spans residues 179 to 200; sequence HKWNKNWTAGTVRNKLWYASLS. The N-linked (GlcNAc...) asparagine glycan is linked to N184. Residues 201-221 form a helical membrane-spanning segment; sequence LVTLIMYSVAVGGLALMAVFY. Over 222–231 the chain is Cytoplasmic; it reads TQWDDCMDNK. The helical transmembrane segment at 232-252 threads the bilayer; it reads ILLGVHGGLCVLISLVAISPC. At 253–260 the chain is on the extracellular side; sequence VQNRQPHS. The chain crosses the membrane as a helical span at residues 261-281; it reads GLLQSGLISCYVTYLTFSALT. The Cytoplasmic portion of the chain corresponds to 282–312; sequence SKPEKKVLDEHGKNVTICAPDFGQDLHRDEN. The helical transmembrane segment at 313–333 threads the bilayer; it reads MVTWLGTLLLIVCISYSCLTS. The Extracellular segment spans residues 334–392; it reads TTRSSSDALQSRYGAPELEVARCCFCFGPDGEDTEEQQNVKKGPRVIYDEKKGTVYSYS. A helical membrane pass occupies residues 393-413; the sequence is YFHFVFFLASLYVMMTLTSWF. Residues 414–422 are Cytoplasmic-facing; that stretch reads HYENATIKT. Residues 423–443 form a helical membrane-spanning segment; sequence FFSGWSVFWVKMASCWMCVLL. Residues 444 to 461 lie on the Extracellular side of the membrane; it reads YLQTLVAPLCCPSRQFSV.

It belongs to the TDE1 family.

Its subcellular location is the cell membrane. It carries out the reaction a 1,2-diacyl-sn-glycero-3-phospho-L-serine(in) = a 1,2-diacyl-sn-glycero-3-phospho-L-serine(out). It catalyses the reaction a 1,2-diacyl-sn-glycero-3-phosphocholine(in) = a 1,2-diacyl-sn-glycero-3-phosphocholine(out). The enzyme catalyses a 1,2-diacyl-sn-glycero-3-phosphoethanolamine(in) = a 1,2-diacyl-sn-glycero-3-phosphoethanolamine(out). Its function is as follows. Restriction factor required to restrict infectivity of gammaretroviruses: acts by inhibiting an early step of viral infection. Impairs the penetration of the viral particle into the cytoplasm. Non-ATP-dependent, non-specific lipid transporter for phosphatidylserine, phosphatidylcholine, and phosphatidylethanolamine. Functions as a scramblase that flips lipids in both directions across the membrane. Phospholipid scrambling results in gammaretroviral surface exposure of phosphatidylserine and loss of membrane asymmetry, which leads to loss of infectivity. Enhances the incorporation of serine into phosphatidylserine and sphingolipids. May play a role in providing serine molecules for the formation of myelin glycosphingolipids in oligodendrocytes. The polypeptide is Serine incorporator 5 (Serinc5) (Mus musculus (Mouse)).